The following is a 178-amino-acid chain: Interleukin-10 (178 aa).

A signal peptide spans 1–18 (MPGSALLCCLLLLAGVKT). Residue N29 is glycosylated (N-linked (GlcNAc...) asparagine). Intrachain disulfides connect C30/C126 and C80/C132. N-linked (GlcNAc...) asparagine glycosylation is present at N134.

Belongs to the IL-10 family. As to quaternary structure, homodimer. Interacts with IL10RA and IL10RB.

It is found in the secreted. Functionally, major immune regulatory cytokine that acts on many cells of the immune system where it has profound anti-inflammatory functions, limiting excessive tissue disruption caused by inflammation. Mechanistically, IL10 binds to its heterotetrameric receptor comprising IL10RA and IL10RB leading to JAK1 and STAT2-mediated phosphorylation of STAT3. In turn, STAT3 translocates to the nucleus where it drives expression of anti-inflammatory mediators. Targets antigen-presenting cells (APCs) such as macrophages and monocytes and inhibits their release of pro-inflammatory cytokines including granulocyte-macrophage colony-stimulating factor /GM-CSF, granulocyte colony-stimulating factor/G-CSF, IL-1 alpha, IL-1 beta, IL-6, IL-8 and TNF-alpha. Also interferes with antigen presentation by reducing the expression of MHC-class II and co-stimulatory molecules, thereby inhibiting their ability to induce T cell activation. In addition, controls the inflammatory response of macrophages by reprogramming essential metabolic pathways including mTOR signaling. The sequence is that of Interleukin-10 (Il10) from Rattus norvegicus (Rat).